The following is a 315-amino-acid chain: 3-oxoacyl-[acyl-carrier-protein] reductase 3, chloroplastic (315 aa).

The transit peptide at 1-55 directs the protein to the chloroplast; it reads MATTVAATKLTSLKAVKKLGFREIRQVRQWTPLQSSMPHFGSRQSFATSTVVKAQ. Residue 77 to 101 participates in NADP(+) binding; it reads VTGASRGIGKAIALSLGKAGCKVLV. Ser209 serves as a coordination point for substrate. Tyr222 functions as the Proton acceptor in the catalytic mechanism.

This sequence belongs to the short-chain dehydrogenases/reductases (SDR) family. Homotetramer.

The protein localises to the plastid. Its subcellular location is the chloroplast. It catalyses the reaction a (3R)-hydroxyacyl-[ACP] + NADP(+) = a 3-oxoacyl-[ACP] + NADPH + H(+). It functions in the pathway lipid metabolism; fatty acid biosynthesis. This chain is 3-oxoacyl-[acyl-carrier-protein] reductase 3, chloroplastic (bkr3), found in Brassica napus (Rape).